Reading from the N-terminus, the 689-residue chain is DNA ligase (689 aa).

Residues 32–36 (DAEYD), 81–82 (SL), and Glu-113 contribute to the NAD(+) site. The active-site N6-AMP-lysine intermediate is Lys-115. The NAD(+) site is built by Arg-136, Glu-176, Lys-306, and Lys-330. Zn(2+) is bound by residues Cys-424, Cys-427, Cys-442, and Cys-448. In terms of domain architecture, BRCT spans 606–689 (AEELPLAEQI…ALLAEHGITI (84 aa)).

The protein belongs to the NAD-dependent DNA ligase family. LigA subfamily. The cofactor is Mg(2+). Requires Mn(2+) as cofactor.

It carries out the reaction NAD(+) + (deoxyribonucleotide)n-3'-hydroxyl + 5'-phospho-(deoxyribonucleotide)m = (deoxyribonucleotide)n+m + AMP + beta-nicotinamide D-nucleotide.. Its function is as follows. DNA ligase that catalyzes the formation of phosphodiester linkages between 5'-phosphoryl and 3'-hydroxyl groups in double-stranded DNA using NAD as a coenzyme and as the energy source for the reaction. It is essential for DNA replication and repair of damaged DNA. This Colwellia psychrerythraea (strain 34H / ATCC BAA-681) (Vibrio psychroerythus) protein is DNA ligase.